A 238-amino-acid polypeptide reads, in one-letter code: tRNA (guanine-N(7)-)-methyltransferase (238 aa).

S-adenosyl-L-methionine is bound by residues Glu70, Asp95, Asp122, and Asp145. The active site involves Asp145. Substrate contacts are provided by residues Lys149, Asp181, and 216-219 (TKFE).

It belongs to the class I-like SAM-binding methyltransferase superfamily. TrmB family.

The catalysed reaction is guanosine(46) in tRNA + S-adenosyl-L-methionine = N(7)-methylguanosine(46) in tRNA + S-adenosyl-L-homocysteine. It functions in the pathway tRNA modification; N(7)-methylguanine-tRNA biosynthesis. Functionally, catalyzes the formation of N(7)-methylguanine at position 46 (m7G46) in tRNA. In Neisseria meningitidis serogroup C / serotype 2a (strain ATCC 700532 / DSM 15464 / FAM18), this protein is tRNA (guanine-N(7)-)-methyltransferase.